The following is a 266-amino-acid chain: Zinc finger protein SNAI2 (266 aa).

Residues 1–20 (MPRSFLVKKHFNSAKKPNYG) form an SNAG domain region. The interval 75-115 (SGYPSSLGRVSPPPQSDTSSKDHSGSESPISDEEERLQTKL) is disordered. 4 C2H2-type zinc fingers span residues 126–148 (FQCS…KQLH), 157–179 (FSCK…IRTH), 183–205 (CVCK…IRTH), and 211–233 (FSCP…LQTH). The segment at 239 to 262 (YQCKNCSKTFSRMSLLHKHEESGC) adopts a C2H2-type 5; atypical zinc-finger fold.

The protein belongs to the snail C2H2-type zinc-finger protein family. In terms of assembly, interacts (via SNAG domain) with limd1 (via LIM domains), wtip (via LIM domains) and ajuba (via LIM domains). Interacts with elp3. As to expression, first expressed on the lateral side of stage 12 embryos. At stage 14, strongly expressed in the lateral neural folds. At stage 16, expressed in pre-migratory neural crest cells. At stage 18, expression is dispersed over the neural plate in a pattern surrounding the rhombomeres. At stage 22, expressed in neural crest derivatives, including the branchial arches and the tissues surrounding the eyes and forebrain. After stage 17, expression is weak in the lateral plate mesoderm, increasing at stage 26, but was down-regulated in the pronephros region at stage 26.

The protein localises to the nucleus. In terms of biological role, probable transcriptional repressor. Acts downstream of snai1 in the specification of the neural crest and neural crest migration. In Xenopus laevis (African clawed frog), this protein is Zinc finger protein SNAI2 (snai2).